The primary structure comprises 563 residues: Forkhead box protein O (563 aa).

Disordered stretches follow at residues 1 to 72 and 177 to 243; these read MDDF…DPQQ and KSVR…SYQL. T43 carries the phosphothreonine; by PKB/AKT1 modification. Polar residues predominate over residues 58-72; sequence TKASNQQLANGDPQQ. The fork-head DNA-binding region spans 90–196; it reads WGNLSYADLI…ETSRYEKRRG (107 aa). The residue at position 185 (S185) is a Phosphoserine; by PKB/AKT1. Positions 216–225 are enriched in polar residues; the sequence is ATPSPSSSVS. S253 is modified (phosphoserine; by PKB/AKT1). 3 positions are modified to phosphoserine: S256, S257, and S262. The tract at residues 317–371 is disordered; that stretch reads AASGLPTQPPPPYQPPQHPQHTQGYALNGPGLSPNSVTTTMSPAYPNSEPSSDSL. Over residues 323 to 334 the composition is skewed to pro residues; sequence TQPPPPYQPPQH. The span at 349-358 shows a compositional bias: polar residues; the sequence is SPNSVTTTMS.

As to quaternary structure, interacts with melt.

It is found in the cytoplasm. The protein resides in the nucleus. In terms of biological role, transcription factor involved in the regulation of the insulin signaling pathway. Consistently activates both the downstream target Thor\d4EBP and the feedback control target InR. Involved in negative regulation of the cell cycle, modulating cell growth and proliferation. In response to cellular stresses, such as nutrient deprivation or increased levels of reactive oxygen species, foxo is activated and inhibits growth through the action of target genes such as Thor. Foxo activated in the adult fat body can regulate lifespan in adults; an insulin peptide itself may function as one secondary messenger of insulin-regulated aging. Also regulates Lip4, homolog of human acid lipases, thereby acting as a key modulator of lipid metabolism by insulin signaling and integrates insulin responses to glucose and lipid homeostasis. The sequence is that of Forkhead box protein O from Drosophila mojavensis (Fruit fly).